Consider the following 816-residue polypeptide: Phosphatidylinositol 4-kinase beta (816 aa).

3 disordered regions span residues 1–30, 101–120, and 248–318; these read MGDT…GSLL, EDEM…RRRR, and AHRK…SFSS. Gly2 carries the N-acetylglycine modification. Residues 2–68 are interaction with ACBD3; that stretch reads GDTVVEPAPL…VKLLHGGMAV (67 aa). The 191-residue stretch at 52–242 folds into the PIK helical domain; that stretch reads CQDVLEKVKL…GTKLRKLILS (191 aa). A Phosphoserine modification is found at Ser258. Thr263 is modified (phosphothreonine). Phosphoserine occurs at positions 266, 275, 277, 284, and 294. Polar residues-rich tracts occupy residues 278 to 297 and 306 to 318; these read DATA…SNPK and SSST…SFSS. At Ser428 the chain carries Phosphoserine. Thr438 bears the Phosphothreonine mark. At Ser511 the chain carries Phosphoserine. Phosphothreonine occurs at positions 517 and 519. Positions 535–801 constitute a PI3K/PI4K catalytic domain; sequence EPWQEKVRRI…MVDGSMRSIT (267 aa). The G-loop stretch occupies residues 541–547; the sequence is VRRIREG. The catalytic loop stretch occupies residues 668 to 676; the sequence is QVKDRHNGN. The interval 687-711 is activation loop; it reads HIDFGFILSSSPRNLGFETSAFKLT.

The protein belongs to the PI3/PI4-kinase family. Type III PI4K subfamily. In terms of assembly, interacts with ARF1 and ARF3 in the Golgi complex, but not with ARF4, ARF5 or ARF6. Interacts with NCS1/FREQ in a calcium-independent manner. Interacts with CALN1/CABP8 and CALN2/CABP7; in a calcium-dependent manner; this interaction competes with NCS1/FREQ binding. Interacts with ACBD3. Interacts with ARMH3, YWHAB, YWHAE, YWHAG, YWHAH, YWHAQ, YWHAZ and SFN. Interacts with GGA2 (via VHS domain); the interaction is important for PI4KB location at the Golgi apparatus membrane. Interacts with ATG9A. Requires Mg(2+) as cofactor. It depends on Mn(2+) as a cofactor.

Its subcellular location is the endomembrane system. It localises to the mitochondrion outer membrane. The protein localises to the rough endoplasmic reticulum membrane. The protein resides in the golgi apparatus. It is found in the golgi apparatus membrane. It catalyses the reaction a 1,2-diacyl-sn-glycero-3-phospho-(1D-myo-inositol) + ATP = a 1,2-diacyl-sn-glycero-3-phospho-(1D-myo-inositol 4-phosphate) + ADP + H(+). Inhibited by wortmannin. Increased kinase activity upon interaction with NCS1/FREQ. Functionally, phosphorylates phosphatidylinositol (PI) in the first committed step in the production of the second messenger inositol-1,4,5,-trisphosphate (PIP). May regulate Golgi disintegration/reorganization during mitosis, possibly via its phosphorylation. Involved in Golgi-to-plasma membrane trafficking. The polypeptide is Phosphatidylinositol 4-kinase beta (PI4KB) (Plecturocebus moloch (Dusky titi monkey)).